Consider the following 54-residue polypeptide: UPF0181 protein PM0480 (54 aa).

This sequence belongs to the UPF0181 family.

The polypeptide is UPF0181 protein PM0480 (Pasteurella multocida (strain Pm70)).